We begin with the raw amino-acid sequence, 482 residues long: Pentatricopeptide repeat-containing protein At1g74900, mitochondrial (482 aa).

PPR repeat units lie at residues 90–124 (DASS…RIGP), 125–159 (SPKT…GCFQ), 160–190 (DLAS…LRGR), 194–228 (DTVT…GINP), 229–263 (NLTT…DCEI), 264–298 (DVVT…GVLP), 299–333 (SVAT…GYEP), 334–368 (NVTT…GCEP), 369–403 (NFQT…DCLP), 404–441 (NLDT…GFIP), and 442–476 (RKFT…GSRL).

Belongs to the PPR family. P subfamily.

The protein localises to the mitochondrion. Required for the trans-splicing of intron 1 of the mitochondrial nad1 transcript encoding the ND1 subunit of the mitochondrial membrane respiratory chain NADH dehydrogenase (Complex I). This is Pentatricopeptide repeat-containing protein At1g74900, mitochondrial (OTP43) from Arabidopsis thaliana (Mouse-ear cress).